The chain runs to 2444 residues: Protein SON (2444 aa).

Residue A2 is modified to N-acetylalanine. K16 carries the N6-acetyllysine modification. The span at 23–37 (ELSSGRSEGQLNGET) shows a compositional bias: polar residues. Positions 23-58 (ELSSGRSEGQLNGETNPPIEGNQAGDTAASARSLPN) are disordered. Residue K64 forms a Glycyl lysine isopeptide (Lys-Gly) (interchain with G-Cter in SUMO2) linkage. Residues 79–88 (YKPDLKEASR) are compositionally biased toward basic and acidic residues. The tract at residues 79 to 155 (YKPDLKEASR…GNLESDSFLK (77 aa)) is disordered. S94 is modified (phosphoserine). Over residues 106-130 (KKSKKHKKHKNKKKKKKKEKEKKYK) the composition is skewed to basic residues. Over residues 131–155 (RQPEESESKLKSHHDGNLESDSFLK) the composition is skewed to basic and acidic residues. 4 positions are modified to phosphoserine: S142, S150, S152, and S158. K284 carries the post-translational modification N6-acetyllysine. Disordered regions lie at residues 301–358 (TLTI…ESLE) and 391–468 (GPPV…PEPP). Pro residues-rich tracts occupy residues 393–406 (PVTPVPELPGPSAT) and 420–439 (PELPGPPATVVPELPGPSVT). T395 bears the Phosphothreonine mark. A 13 X 10 AA tandem repeats of L-A-[ST]-[NSG]-[TS]-MDSQM region spans residues 721-850 (LASNTMDSQM…LATSSMDSQM (130 aa)). The segment at 907 to 983 (DPYRLAQDPY…IAPRPYRLAP (77 aa)) is 11 X 7 AA tandem repeats of [DR]-P-Y-R-[LI][AG][QHP]. R945 carries the post-translational modification Omega-N-methylarginine. At T954 the chain carries Phosphothreonine. S993 bears the Phosphoserine mark. 14 tandem repeats follow at residues 1001-1006 (ERSMMS), 1009-1014 (ERSMMS), 1016-1021 (ERSMMS), 1025-1030 (ERSMMS), 1033-1038 (ERSMMS), 1041-1046 (ERSMMS), 1050-1055 (ERSMMS), 1058-1063 (ERSMMS), 1066-1071 (ERSMMS), 1075-1080 (DRSMMS), 1084-1089 (DRSMMS), 1095-1100 (DRSMMS), 1106-1111 (DRSMMS), and 1115-1120 (DRSMMS). Residues 1001–1120 (ERSMMSSYER…SSYTDRSMMS (120 aa)) are 14 X 6 AA repeats of [ED]-R-S-M-M-S. An Asymmetric dimethylarginine modification is found at R1002. R1017 is modified (asymmetric dimethylarginine). Residues S1030 and S1038 each carry the phosphoserine modification. Phosphoserine occurs at positions 1055 and 1063. S1077 is subject to Phosphoserine. Pro residues predominate over residues 1141-1168 (PPLPPEEPPTMPPLPPEEPPMTPPLPPE). Residues 1141 to 1173 (PPLPPEEPPTMPPLPPEEPPMTPPLPPEEPPEG) are 3 X 11 AA tandem repats of P-P-L-P-P-E-E-P-P-[TME]-[MTG]. A disordered region spans residues 1141-1213 (PPLPPEEPPT…PEPPVSQSEI (73 aa)). Residues 1177–1213 (STEQSALTADNTWSTEVTLSTGESLSQPEPPVSQSEI) show a composition bias toward polar residues. Phosphoserine occurs at positions 1678, 1723, 1727, 1772, 1784, 1791, 1794, 1807, and 1808. Positions 1802 to 2072 (ERASESSSEE…RSPKRLTDLD (271 aa)) are disordered. Basic and acidic residues-rich tracts occupy residues 1815 to 1826 (YEIFVKVKDTHE), 1834 to 1847 (RDKGEKEKKRDSSL), and 1855 to 1870 (KSSEHKSRKRTSESRS). Basic residues-rich tracts occupy residues 1871–1934 (RARK…RKRS) and 1942–1973 (AARARSRTPSRRSRSHTPSRRRRSRSVGRRRS). 7 consecutive repeat copies span residues 1950-1956 (PSRRSRS), 1959-1977 (PSRRRRSRSVGRRRSFSIS), 1978-1984 (PSRRSRT), 1985-1991 (PSRRSRT), 1992-1998 (PSRRSRT), 1999-2005 (PSRRSRT), and 2006-2012 (PSRRSRT). The segment at 1950-2019 (PSRRSRSHTP…SRTPSRRRRS (70 aa)) is 7 X 7 AA repeats of P-S-R-R-S-R-[TS]. Residues 1959–2030 (PSRRRRSRSV…SAVRRRSFSI (72 aa)) are 2 X 19 AA repeats of P-S-R-R-R-R-S-R-S-V-V-R-R-R-S-F-S-I-S. Residues S1973, S1975, and S1977 each carry the phosphoserine modification. Residues 1980–2027 (RRSRTPSRRSRTPSRRSRTPSRRSRTPSRRSRTPSRRRRSRSAVRRRS) are compositionally biased toward basic residues. Residues 2013-2019 (PSRRRRS) form a 2-7; approximate repeat. The 3-2; approximate repeat unit spans residues 2020-2030 (RSAVRRRSFSI). S2027, S2029, S2031, S2047, and S2049 each carry phosphoserine. The 3 X tandem repeats of [ST]-P-[VLI]-R-[RL]-[RK]-[RF]-S-R stretch occupies residues 2031–2057 (SPVRLRRSRTPLRRRFSRSPIRRKRSR). Residues 2034 to 2056 (RLRRSRTPLRRRFSRSPIRRKRS) show a composition bias toward basic residues. The segment covering 2057 to 2072 (RSSERGRSPKRLTDLD) has biased composition (basic and acidic residues). K2073 is subject to N6-acetyllysine; alternate. A Glycyl lysine isopeptide (Lys-Gly) (interchain with G-Cter in SUMO2); alternate cross-link involves residue K2073. Residue K2110 forms a Glycyl lysine isopeptide (Lys-Gly) (interchain with G-Cter in SUMO2) linkage. Position 2147 is a phosphoserine (S2147). K2167 is covalently cross-linked (Glycyl lysine isopeptide (Lys-Gly) (interchain with G-Cter in SUMO2)). Position 2181 is a phosphothreonine (T2181). Residues 2192–2238 (EFPVSSGSQHRKKEADSVYGEWVPVEKNGEESKDDDNVFSSSLPSEP) form a disordered region. Phosphoserine is present on S2256. Residues 2323 to 2369 (TGGMGAVLMRKMGWREGEGLGKNKEGNKEPILVDFKTDRKGLVAVGE) enclose the G-patch domain. The region spanning 2389 to 2444 (HPVSALMEICNKRRWQPPEFLLVHDSGPDHRKHFLFRVLRNGSPYQPNCMFFLNRY) is the DRBM domain.

Interacts with SRSF2. Associates with the spliceosome. Interacts with USH1G. As to expression, widely expressed. Highly expressed in brain, heart, spleen, liver, skeletal muscle, kidney and testis.

It localises to the nucleus speckle. Its function is as follows. RNA-binding protein that acts as a mRNA splicing cofactor by promoting efficient splicing of transcripts that possess weak splice sites. Specifically promotes splicing of many cell-cycle and DNA-repair transcripts that possess weak splice sites, such as TUBG1, KATNB1, TUBGCP2, AURKB, PCNT, AKT1, RAD23A, and FANCG. Probably acts by facilitating the interaction between Serine/arginine-rich proteins such as SRSF2 and the RNA polymerase II. Also binds to DNA; binds to the consensus DNA sequence: 5'-GA[GT]AN[CG][AG]CC-3'. Essential for correct RNA splicing of multiple genes critical for brain development, neuronal migration and metabolism, including TUBG1, FLNA, PNKP, WDR62, PSMD3, PCK2, PFKL, IDH2, and ACY1. May also regulate the ghrelin signaling in hypothalamic neuron by acting as a negative regulator of GHSR expression. The chain is Protein SON (Son) from Mus musculus (Mouse).